A 347-amino-acid polypeptide reads, in one-letter code: UDP-N-acetylglucosamine--N-acetylmuramyl-(pentapeptide) pyrophosphoryl-undecaprenol N-acetylglucosamine transferase (347 aa).

UDP-N-acetyl-alpha-D-glucosamine-binding positions include 11–13 (TGG), asparagine 122, arginine 163, serine 189, and glutamine 279.

This sequence belongs to the glycosyltransferase 28 family. MurG subfamily.

It localises to the cell inner membrane. It catalyses the reaction di-trans,octa-cis-undecaprenyl diphospho-N-acetyl-alpha-D-muramoyl-L-alanyl-D-glutamyl-meso-2,6-diaminopimeloyl-D-alanyl-D-alanine + UDP-N-acetyl-alpha-D-glucosamine = di-trans,octa-cis-undecaprenyl diphospho-[N-acetyl-alpha-D-glucosaminyl-(1-&gt;4)]-N-acetyl-alpha-D-muramoyl-L-alanyl-D-glutamyl-meso-2,6-diaminopimeloyl-D-alanyl-D-alanine + UDP + H(+). It participates in cell wall biogenesis; peptidoglycan biosynthesis. Functionally, cell wall formation. Catalyzes the transfer of a GlcNAc subunit on undecaprenyl-pyrophosphoryl-MurNAc-pentapeptide (lipid intermediate I) to form undecaprenyl-pyrophosphoryl-MurNAc-(pentapeptide)GlcNAc (lipid intermediate II). This Sulfurihydrogenibium sp. (strain YO3AOP1) protein is UDP-N-acetylglucosamine--N-acetylmuramyl-(pentapeptide) pyrophosphoryl-undecaprenol N-acetylglucosamine transferase.